Reading from the N-terminus, the 439-residue chain is Glycosyl hydrolase DigH (439 aa).

The first 27 residues, M1–S27, serve as a signal peptide directing secretion. The N-palmitoyl cysteine moiety is linked to residue C28. C28 carries S-diacylglycerol cysteine lipidation. Residues E34–Q54 form a disordered region.

This sequence belongs to the glycosyl hydrolase-like 10 (GHL10) family.

It localises to the cell outer membrane. In terms of biological role, divisome-localized glycosyl hydrolase that cleaves peptide-free (denuded) peptidoglycans. The polypeptide is Glycosyl hydrolase DigH (Escherichia coli O157:H7).